We begin with the raw amino-acid sequence, 307 residues long: GMP synthase [glutamine-hydrolyzing] subunit B (307 aa).

The 184-residue stretch at 1–184 folds into the GMPS ATP-PPase domain; the sequence is MWENFIEEKV…LGLPEKIYNR (184 aa). Residue 27–33 participates in ATP binding; sequence SGGVDSS.

As to quaternary structure, heterodimer composed of a glutamine amidotransferase subunit (A) and a GMP-binding subunit (B).

It carries out the reaction XMP + L-glutamine + ATP + H2O = GMP + L-glutamate + AMP + diphosphate + 2 H(+). The protein operates within purine metabolism; GMP biosynthesis; GMP from XMP (L-Gln route): step 1/1. Functionally, catalyzes the synthesis of GMP from XMP. This Thermococcus kodakarensis (strain ATCC BAA-918 / JCM 12380 / KOD1) (Pyrococcus kodakaraensis (strain KOD1)) protein is GMP synthase [glutamine-hydrolyzing] subunit B.